The chain runs to 129 residues: Fluoride-specific ion channel FluC (129 aa).

4 helical membrane-spanning segments follow: residues 10–30 (LLVGAGGFLGTVARYLVALAF), 35–55 (PGFPFATFSVNIAGSFLIGFL), 71–91 (LFLVTGFCGGFTTFSSYMFEG), and 105–125 (LYLAGSIVGGFVALYTGIIAA). Positions 79 and 82 each coordinate Na(+).

Belongs to the fluoride channel Fluc/FEX (TC 1.A.43) family.

Its subcellular location is the cell inner membrane. It carries out the reaction fluoride(in) = fluoride(out). Na(+) is not transported, but it plays an essential structural role and its presence is essential for fluoride channel function. Fluoride-specific ion channel. Important for reducing fluoride concentration in the cell, thus reducing its toxicity. This Chlorobium luteolum (strain DSM 273 / BCRC 81028 / 2530) (Pelodictyon luteolum) protein is Fluoride-specific ion channel FluC.